The sequence spans 167 residues: Signal peptidase complex subunit 2 (167 aa).

The Cytoplasmic portion of the chain corresponds to 1–36 (MPKYNVSDFKSKFDKELTNHFNKNGYKQSFVFEDIR). The chain crosses the membrane as a helical span at residues 37-57 (LLIAIACIIPAGLAFGIEYVY). Over 58–68 (GFGVLKSYLKY) the chain is Lumenal. Residues 69 to 89 (LLPLYFLASCLLTFWSSVVKG) traverse the membrane as a helical segment. Residues 90–167 (STVYVATKKE…ISKYLSQIEN (78 aa)) are Cytoplasmic-facing.

This sequence belongs to the SPCS2 family. Component of the signal peptidase complex (SPC) composed of a catalytic subunit sec11 and three accessory subunits spc1, spc2 and spc3. The complex induces a local thinning of the ER membrane which is used to measure the length of the signal peptide (SP) h-region of protein substrates. This ensures the selectivity of the complex towards h-regions shorter than 18-20 amino acids. SPC associates with the translocon complex.

It is found in the endoplasmic reticulum membrane. Functionally, component of the signal peptidase complex (SPC) which catalyzes the cleavage of N-terminal signal sequences from nascent proteins as they are translocated into the lumen of the endoplasmic reticulum. Enhances the enzymatic activity of SPC and facilitates the interactions between different components of the translocation site. In Schizosaccharomyces pombe (strain 972 / ATCC 24843) (Fission yeast), this protein is Signal peptidase complex subunit 2 (spc2).